The chain runs to 80 residues: Antitoxin VapB15 (80 aa).

The interval 60-80 is disordered; the sequence is DFSNDEIESFSDTDRKLADES. Glu-67 contacts Mg(2+). Glu-67 lines the Mn(2+) pocket. The segment covering 71–80 has biased composition (basic and acidic residues); the sequence is DTDRKLADES.

As to quaternary structure, forms a VapB15-VapC15(2) heterotrimer and a VapB15(2)-VapC15(2) heterotetramer; each toxin pair forms a homodimer which creates a channel in which the antitoxin binds. Requires Mg(2+) as cofactor. The cofactor is Mn(2+).

In terms of biological role, antitoxin component of a type II toxin-antitoxin (TA) system. Neutralizes the toxic effect of cognate toxin VapC15. This is Antitoxin VapB15 (vapB15) from Mycobacterium tuberculosis (strain CDC 1551 / Oshkosh).